We begin with the raw amino-acid sequence, 398 residues long: Enolase (398 aa).

Q154 contributes to the (2R)-2-phosphoglycerate binding site. E196 (proton donor) is an active-site residue. Mg(2+) is bound by residues D232, E273, and D300. The (2R)-2-phosphoglycerate site is built by K325, R354, S355, and K376. K325 acts as the Proton acceptor in catalysis.

The protein belongs to the enolase family. Requires Mg(2+) as cofactor.

It is found in the cytoplasm. The protein resides in the secreted. It localises to the cell surface. It carries out the reaction (2R)-2-phosphoglycerate = phosphoenolpyruvate + H2O. The protein operates within carbohydrate degradation; glycolysis; pyruvate from D-glyceraldehyde 3-phosphate: step 4/5. In terms of biological role, catalyzes the reversible conversion of 2-phosphoglycerate (2-PG) into phosphoenolpyruvate (PEP). It is essential for the degradation of carbohydrates via glycolysis. This is Enolase from Halobacterium salinarum (strain ATCC 700922 / JCM 11081 / NRC-1) (Halobacterium halobium).